Consider the following 203-residue polypeptide: dITP/XTP pyrophosphatase (203 aa).

Serine 15–lysine 20 contributes to the substrate binding site. Mg(2+) is bound by residues glutamate 45 and aspartate 74. Aspartate 74 (proton acceptor) is an active-site residue. Residues serine 75, phenylalanine 153–aspartate 156, lysine 176, and histidine 181–arginine 182 each bind substrate.

It belongs to the HAM1 NTPase family. Homodimer. Mg(2+) is required as a cofactor.

The catalysed reaction is XTP + H2O = XMP + diphosphate + H(+). The enzyme catalyses dITP + H2O = dIMP + diphosphate + H(+). It carries out the reaction ITP + H2O = IMP + diphosphate + H(+). In terms of biological role, pyrophosphatase that catalyzes the hydrolysis of nucleoside triphosphates to their monophosphate derivatives, with a high preference for the non-canonical purine nucleotides XTP (xanthosine triphosphate), dITP (deoxyinosine triphosphate) and ITP. Seems to function as a house-cleaning enzyme that removes non-canonical purine nucleotides from the nucleotide pool, thus preventing their incorporation into DNA/RNA and avoiding chromosomal lesions. The chain is dITP/XTP pyrophosphatase from Prochlorococcus marinus (strain MIT 9313).